The chain runs to 228 residues: MCHVIVTCRSMLWTLLSIVVAFAELIAFMSADWLIGKARSRGGVEPAGPGGGSPEPYHPTLGIYARCIRNPGVQHFQRDTLCGPYAESFGEIASGFWQATAIFLAVGIFILCMVALVSVFTMCVQSIMKKSIFNVCGLLQGIAGLFLILGLILYPAGWGCQKAIDYCGHYASAYKPGDCSLGWAFYTAIGGTVLTFICAVFSAQAEIATSSDKVQEEIEEGKNLICLL.

The next 4 helical transmembrane spans lie at 11-31 (MLWT…FMSA), 102-122 (IFLA…VFTM), 132-152 (IFNV…LGLI), and 181-201 (LGWA…CAVF).

This sequence belongs to the LHFP family. Expressed in all tissues and cell lines examined except brain and peripheral blood leukocytes.

Its subcellular location is the membrane. Its function is as follows. Plays a role in female and male fertility. Involved in distal reproductive tract development. This chain is LHFPL tetraspan subfamily member 2 protein, found in Homo sapiens (Human).